Reading from the N-terminus, the 103-residue chain is Hexon-interlacing protein (103 aa).

The tract at residues 25–45 (RQNVTGSDLGGKPVPSDVLES) is disordered. A coiled-coil region spans residues 72-99 (LDDLKTQVAAMQNSVTAIQEELKDLKQR).

This sequence belongs to the adenoviridae hexon-interlacing protein family. As to quaternary structure, homotrimer. Interacts with hexon protein; this interaction tethers the hexons together. Self-interacts with adjacent proteins. Interacts with kinesin light chain KLC1; this interaction leads to capsid disruption at the nuclear pore complex during virus entry into host cell.

It localises to the virion. It is found in the host nucleus. Structural component of the virion that acts as a cement protein on the capsid exterior and forms triskelion structures consisting of three molecules that stabilize three hexon trimers at the center of each icosahedral facet and fixes the peripentonal hexons. Dispensable for assembly. During virus entry, recruits the anterograde motor kinesin-1 to the capsid docked at the nuclear pore complex thereby subjecting the docked capsid to a pulling force. The resulting tension leads to capsid disruption, dispersion of capsid fragments toward cell periphery and eventually viral DNA entry into the host nucleus. This chain is Hexon-interlacing protein, found in Canine adenovirus serotype 1 (strain CLL) (CAdV-1).